Reading from the N-terminus, the 189-residue chain is Thioredoxin-like protein CITRX, chloroplastic (189 aa).

The transit peptide at 1–56 (MAMAAAASLLPASAAPTLPGRAFRPPRNSTPTASLSCDGGSRCRGVGLGVILGGCR) directs the protein to the chloroplast. Positions 72–189 (GSGKYIAPDY…MIRNIIDNEL (118 aa)) constitute a Thioredoxin domain. Residues cysteine 112 and cysteine 115 each act as nucleophile in the active site. Cysteines 112 and 115 form a disulfide.

It belongs to the thioredoxin family. Plant CITRX-type subfamily.

It is found in the plastid. It localises to the chloroplast. Its function is as follows. Probable thiol-disulfide oxidoreductase that may play a role in proper chloroplast development. In Oryza sativa subsp. japonica (Rice), this protein is Thioredoxin-like protein CITRX, chloroplastic.